We begin with the raw amino-acid sequence, 325 residues long: D-alanine--D-alanine ligase (325 aa).

The 205-residue stretch at 107-311 (KRLLLSESLP…YEALCVEVLK (205 aa)) folds into the ATP-grasp domain. An ATP-binding site is contributed by 137-192 (VDTLGLPLIVKPAREGSSLGLSKVTERAAMAAAVALAEKMDADILCEQFISGDEVT). Positions 264, 278, and 280 each coordinate Mg(2+).

The protein belongs to the D-alanine--D-alanine ligase family. Mg(2+) serves as cofactor. Mn(2+) is required as a cofactor.

The protein localises to the cytoplasm. It carries out the reaction 2 D-alanine + ATP = D-alanyl-D-alanine + ADP + phosphate + H(+). It functions in the pathway cell wall biogenesis; peptidoglycan biosynthesis. Cell wall formation. In Polaromonas naphthalenivorans (strain CJ2), this protein is D-alanine--D-alanine ligase.